The primary structure comprises 172 residues: Carotene biosynthesis-related protein CBR, chloroplastic (172 aa).

Residues 41–66 (AENNPSTPPPSSPSPPPPPPTPAAPT) form a disordered region. Over residues 46-63 (STPPPSSPSPPPPPPTPA) the composition is skewed to pro residues. Helical transmembrane passes span 111–131 (PTLI…PAFA) and 152–172 (FAMI…IALF).

Belongs to the ELIP/psbS family.

Its subcellular location is the plastid. It is found in the chloroplast membrane. Putative zeaxanthin binding protein. That forms photoprotective complexes within the light-harvesting antennae. In Dunaliella salina (Green alga), this protein is Carotene biosynthesis-related protein CBR, chloroplastic (CBR).